The primary structure comprises 1069 residues: Acyl-CoA dehydrogenase family member 10 (1069 aa).

Lysine 413 carries the N6-succinyllysine modification. Lysine 427 carries the N6-acetyllysine; alternate modification. Lysine 427 bears the N6-succinyllysine; alternate mark. FAD contacts are provided by residues 792–802, serine 828, arginine 943, glutamine 1013, and glutamate 1044; that span reads FAMTEPQVASS. N6-acetyllysine; alternate is present on lysine 1052. Residue lysine 1052 is modified to N6-succinyllysine; alternate.

It belongs to the acyl-CoA dehydrogenase family. FAD is required as a cofactor.

The catalysed reaction is a 2,3-saturated acyl-CoA + A = a 2,3-dehydroacyl-CoA + AH2. Its function is as follows. Acyl-CoA dehydrogenase only active with R- and S-2-methyl-C15-CoA. In Mus musculus (Mouse), this protein is Acyl-CoA dehydrogenase family member 10 (Acad10).